The following is a 212-amino-acid chain: Golgi SNAP receptor complex member 2 (212 aa).

At methionine 1 the chain carries N-acetylmethionine. At 1–190 (MDPLFQQTHK…LIEKRAFQDK (190 aa)) the chain is on the cytoplasmic side. The stretch at 61 to 107 (NKRQNARLRVDQLKYDVQHLQTALRNFQHRRHAREQQERQREELLSR) forms a coiled coil. An IxM motif; signal for cargo packaging into COPII-coated vesicles motif is present at residues 118–120 (IPM). Residues 191–211 (YFMIGGMLLTCVVMFLVVQYL) traverse the membrane as a helical; Anchor for type IV membrane protein segment. Position 212 (threonine 212) is a topological domain, vesicular.

This sequence belongs to the GOSR2 family. Part of a unique SNARE complex composed of the Golgi SNAREs GOSR1, STX5 and YKT6. Interacts (via IxM motif) with SEC24C and SEC24D; mediates GOSR2 packaging into COPII-coated vesicles. Interacts with BET1.

The protein localises to the golgi apparatus. The protein resides in the cis-Golgi network membrane. It is found in the golgi apparatus membrane. Its subcellular location is the endoplasmic reticulum membrane. Functionally, involved in transport of proteins from the cis/medial-Golgi to the trans-Golgi network. This is Golgi SNAP receptor complex member 2 (GOSR2) from Homo sapiens (Human).